The chain runs to 179 residues: Fucolectin-4 (179 aa).

A signal peptide spans 1–23 (MEVKTIMLLFQILAISTLKQGSA). Residues 31–179 (EENVALRGRA…VEVNALLPVN (149 aa)) are F5/8 type C-like. Residues Asn58, Asp61, Asn63, and Ser72 each contribute to the Ca(2+) site. 3 cysteine pairs are disulfide-bonded: Cys73/Cys168, Cys104/Cys105, and Cys130/Cys146. Alpha-L-fucose contacts are provided by His75 and Arg101. The Cell attachment site motif lies at 101–103 (RGD). Position 108 (Arg108) interacts with alpha-L-fucose. Residues Cys168 and Glu169 each contribute to the Ca(2+) site.

The protein belongs to the fucolectin family. As to quaternary structure, homotrimer. Gill mucous cells.

Its subcellular location is the secreted. Functionally, acts as a defensive agent. Recognizes blood group fucosylated oligosaccharides including A, B, H and Lewis B-type antigens. Does not recognize Lewis A antigen and has low affinity for monovalent haptens. The chain is Fucolectin-4 from Anguilla japonica (Japanese eel).